Consider the following 266-residue polypeptide: Glucosamine-6-phosphate deaminase (266 aa).

The Proton acceptor; for enolization step role is filled by Asp-72. Asp-141 acts as the For ring-opening step in catalysis. The active-site Proton acceptor; for ring-opening step is His-143. The For ring-opening step role is filled by Glu-148.

Belongs to the glucosamine/galactosamine-6-phosphate isomerase family. NagB subfamily. Homohexamer.

The catalysed reaction is alpha-D-glucosamine 6-phosphate + H2O = beta-D-fructose 6-phosphate + NH4(+). It functions in the pathway amino-sugar metabolism; N-acetylneuraminate degradation; D-fructose 6-phosphate from N-acetylneuraminate: step 5/5. With respect to regulation, allosterically activated by N-acetylglucosamine 6-phosphate (GlcNAc6P). In terms of biological role, catalyzes the reversible isomerization-deamination of glucosamine 6-phosphate (GlcN6P) to form fructose 6-phosphate (Fru6P) and ammonium ion. The sequence is that of Glucosamine-6-phosphate deaminase from Salmonella typhimurium (strain LT2 / SGSC1412 / ATCC 700720).